The following is a 399-amino-acid chain: Peroxisome assembly protein 12 (399 aa).

The tract at residues Met-1 to Gly-24 is disordered. Residues Met-1–Thr-33 lie on the Peroxisomal matrix side of the membrane. Over residues Ser-9 to Gly-24 the composition is skewed to low complexity. A helical membrane pass occupies residues Ile-34–Asn-62. Over Phe-63 to Tyr-67 the chain is Cytoplasmic. Residues Thr-68–Lys-92 form a helical membrane-spanning segment. At Thr-93 to Asn-136 the chain is on the peroxisomal matrix side. A helical transmembrane segment spans residues Gln-137–Asn-168. The Cytoplasmic portion of the chain corresponds to Ile-169–Ser-171. Residues Ser-172–Thr-208 form a helical membrane-spanning segment. At Lys-209 to Gln-277 the chain is on the peroxisomal matrix side. The helical transmembrane segment at Phe-278–Val-305 threads the bilayer. The Cytoplasmic portion of the chain corresponds to Asn-306–Ile-399. Residues Cys-334, Cys-337, Cys-354, and Cys-357 each coordinate Zn(2+). The RING-type; degenerate zinc-finger motif lies at Cys-334–Asn-373.

Belongs to the pex2/pex10/pex12 family. Component of the PEX2-PEX10-PEX12 retrotranslocation channel, composed of PEX2, PEX10 and PEX12.

It localises to the peroxisome membrane. The protein operates within protein modification; protein ubiquitination. Its function is as follows. Component of a retrotranslocation channel required for peroxisome organization by mediating export of the PEX5 receptor from peroxisomes to the cytosol, thereby promoting PEX5 recycling. The retrotranslocation channel is composed of PEX2, PEX10 and PEX12; each subunit contributing transmembrane segments that coassemble into an open channel that specifically allows the passage of PEX5 through the peroxisomal membrane. PEX12 also regulates PEX5 recycling by activating the E3 ubiquitin-protein ligase activity of PEX10. When PEX5 recycling is compromised, PEX12 stimulates PEX10-mediated polyubiquitination of PEX5, leading to its subsequent degradation. The sequence is that of Peroxisome assembly protein 12 from Saccharomyces cerevisiae (strain ATCC 204508 / S288c) (Baker's yeast).